The chain runs to 910 residues: Disease resistance protein RPH8A (910 aa).

The stretch at 15–57 forms a coiled coil; sequence DLLSRESERLQGIDEQLDGLKRQLRSLQSLLKDADAKKHGSDR. In terms of domain architecture, NB-ARC spans 146–459; it reads RQRVQREIRQ…AEGIYDGSTI (314 aa). 192–199 contributes to the ATP binding site; that stretch reads GMGGIGKT.

The protein belongs to the disease resistance NB-LRR family. RPP8/HRT subfamily.

In terms of biological role, disease resistance protein. Resistance proteins guard the plant against pathogens that contain an appropriate avirulence protein via an indirect interaction with this avirulence protein. That triggers a defense system including the hypersensitive response, which restricts the pathogen growth. In contrast to RPP8, it does not specifically recognize the Emco5 avirulence protein from Hyaloperonospora parasitica. The sequence is that of Disease resistance protein RPH8A (RPH8A) from Arabidopsis thaliana (Mouse-ear cress).